The following is a 205-amino-acid chain: Urease accessory protein UreG (205 aa).

14-21 (GPVGSGKT) serves as a coordination point for GTP.

It belongs to the SIMIBI class G3E GTPase family. UreG subfamily. Homodimer. UreD, UreF and UreG form a complex that acts as a GTP-hydrolysis-dependent molecular chaperone, activating the urease apoprotein by helping to assemble the nickel containing metallocenter of UreC. The UreE protein probably delivers the nickel.

It localises to the cytoplasm. In terms of biological role, facilitates the functional incorporation of the urease nickel metallocenter. This process requires GTP hydrolysis, probably effectuated by UreG. The polypeptide is Urease accessory protein UreG (Escherichia coli).